The following is a 195-amino-acid chain: Ras-related protein Rab-31 (195 aa).

Residues G16, G18, K19, S20, S21, D32, and H33 each contribute to the GTP site. S20 contacts Mg(2+). Short sequence motifs (switch) lie at residues 30-42 (HFDHNISPTIGAS) and 63-79 (AGQERFHSLAPMYYRGS). A Phosphoserine modification is found at S36. GTP contacts are provided by T38, G64, N119, D122, A150, and K151. Mg(2+) is bound at residue T38. Residues C194 and C195 are each lipidated (S-geranylgeranyl cysteine).

This sequence belongs to the small GTPase superfamily. Rab family. In terms of assembly, interacts with OCRL. Interacts with NGFR. Interacts (in GDP-bound form) with RIN3 and GAPVD1, which function as guanine exchange factors (GEF). Interacts (in GTP-bound form) with EEA1. Interacts with EGFR. Interacts (in GTP-bound form) with APPL2; interaction contributes to or enhances recruitment of APPL2 to the phagosomes; interaction enhances Fc-gamma receptor-mediated phagocytosis through PI3K/Akt signaling in macrophages. Requires Mg(2+) as cofactor. Highest expression in placenta and brain with lower levels in heart and lung. Not detected in liver, skeletal muscle, kidney or pancreas.

The protein resides in the golgi apparatus. It localises to the trans-Golgi network. It is found in the trans-Golgi network membrane. The protein localises to the early endosome. Its subcellular location is the cytoplasmic vesicle. The protein resides in the phagosome. It localises to the phagosome membrane. It carries out the reaction GTP + H2O = GDP + phosphate + H(+). Regulated by guanine nucleotide exchange factors (GEFs) including RIN3 and GAPVD1 which promote the exchange of bound GDP for free GTP. Regulated by GTPase activating proteins (GAPs) which increase the GTP hydrolysis activity. Inhibited by GDP dissociation inhibitors (GDIs) which prevent Rab-GDP dissociation. Its function is as follows. The small GTPases Rab are key regulators of intracellular membrane trafficking, from the formation of transport vesicles to their fusion with membranes. Rabs cycle between an inactive GDP-bound form and an active GTP-bound form that is able to recruit to membranes different set of downstream effectors directly responsible for vesicle formation, movement, tethering and fusion. Required for the integrity and for normal function of the Golgi apparatus and the trans-Golgi network. Plays a role in insulin-stimulated translocation of GLUT4 to the cell membrane. Plays a role in M6PR transport from the trans-Golgi network to endosomes. Plays a role in the internalization of EGFR from the cell membrane into endosomes. Plays a role in the maturation of phagosomes that engulf pathogens, such as S.aureus and M.tuberculosis. In Homo sapiens (Human), this protein is Ras-related protein Rab-31.